The following is a 367-amino-acid chain: Small ribosomal subunit protein uS2 (367 aa).

The tract at residues 1–68 (MPKKAEAKTG…NSTPSTGSKF (68 aa)) is disordered. Over residues 21-40 (AKKDVKAEVNETNKTAEKVS) the composition is skewed to basic and acidic residues. Residues 53–66 (TNESSSNSTPSTGS) are compositionally biased toward low complexity.

The protein belongs to the universal ribosomal protein uS2 family.

This Malacoplasma penetrans (strain HF-2) (Mycoplasma penetrans) protein is Small ribosomal subunit protein uS2.